A 313-amino-acid polypeptide reads, in one-letter code: Phosphoenolpyruvate phosphomutase (313 aa).

Residues 1-23 (MNATERPGSDGTGSPESVGSRLK) form a disordered region. Asp-69 (nucleophile) is an active-site residue.

It belongs to the isocitrate lyase/PEP mutase superfamily. PEP mutase family.

It catalyses the reaction phosphoenolpyruvate + H(+) = 3-phosphonopyruvate. The protein operates within secondary metabolite biosynthesis; bialaphos biosynthesis. Its function is as follows. Formation of a carbon-phosphorus bond by converting phosphoenolpyruvate (PEP) to phosphonopyruvate (P-Pyr). In Streptomyces viridochromogenes (strain DSM 40736 / JCM 4977 / BCRC 1201 / Tue 494), this protein is Phosphoenolpyruvate phosphomutase (ppm).